A 495-amino-acid polypeptide reads, in one-letter code: Glycerol kinase (495 aa).

An ADP-binding site is contributed by T11. T11, T12, and S13 together coordinate ATP. A sn-glycerol 3-phosphate-binding site is contributed by T11. R81, E82, Y133, and D242 together coordinate sn-glycerol 3-phosphate. Glycerol is bound by residues R81, E82, Y133, D242, and Q243. ADP contacts are provided by T264, G307, G407, and N411. ATP-binding residues include T264, G307, and G407.

Belongs to the FGGY kinase family.

It catalyses the reaction glycerol + ATP = sn-glycerol 3-phosphate + ADP + H(+). The protein operates within polyol metabolism; glycerol degradation via glycerol kinase pathway; sn-glycerol 3-phosphate from glycerol: step 1/1. With respect to regulation, inhibited by fructose 1,6-bisphosphate (FBP). Key enzyme in the regulation of glycerol uptake and metabolism. Catalyzes the phosphorylation of glycerol to yield sn-glycerol 3-phosphate. In Thermus brockianus, this protein is Glycerol kinase.